Here is a 200-residue protein sequence, read N- to C-terminus: Proteasome subunit beta 2 (200 aa).

The propeptide at methionine 1–glycine 7 is removed in mature form; by autocatalysis. Threonine 8 serves as the catalytic Nucleophile.

It belongs to the peptidase T1B family. As to quaternary structure, the 20S proteasome core is composed of 14 alpha and 14 beta subunits that assemble into four stacked heptameric rings, resulting in a barrel-shaped structure. The two inner rings, each composed of seven catalytic beta subunits, are sandwiched by two outer rings, each composed of seven alpha subunits. The catalytic chamber with the active sites is on the inside of the barrel. Has a gated structure, the ends of the cylinder being occluded by the N-termini of the alpha-subunits. Is capped at one or both ends by the proteasome regulatory ATPase, PAN.

Its subcellular location is the cytoplasm. The enzyme catalyses Cleavage of peptide bonds with very broad specificity.. The formation of the proteasomal ATPase PAN-20S proteasome complex, via the docking of the C-termini of PAN into the intersubunit pockets in the alpha-rings, triggers opening of the gate for substrate entry. Interconversion between the open-gate and close-gate conformations leads to a dynamic regulation of the 20S proteasome proteolysis activity. Its function is as follows. Component of the proteasome core, a large protease complex with broad specificity involved in protein degradation. In Thermococcus onnurineus (strain NA1), this protein is Proteasome subunit beta 2.